The following is a 377-amino-acid chain: Histidine protein methyltransferase 1 (377 aa).

It belongs to the methyltransferase superfamily. METTL18 family.

The protein localises to the cytoplasm. The protein resides in the nucleus. It carries out the reaction L-histidyl-[protein] + S-adenosyl-L-methionine = N(tele)-methyl-L-histidyl-[protein] + S-adenosyl-L-homocysteine + H(+). Functionally, protein-histidine N-methyltransferase that mediates methylation of RPL3 at 'His-243'. Methylates ribosome-associated RPL3, but not free RPL3, thereby regulating 60S subunit assembly. In addition to RPL3, mediates His methylation of other proteins. This chain is Histidine protein methyltransferase 1, found in Saccharomyces cerevisiae (strain ATCC 204508 / S288c) (Baker's yeast).